A 265-amino-acid chain; its full sequence is Very long chain fatty acid elongase 6 (265 aa).

The N-linked (GlcNAc...) asparagine glycan is linked to N2. 7 helical membrane passes run 34–51, 70–90, 111–131, 136–156, 159–179, 197–217, and 232–252; these read FLFS…RHLM, LAVF…YILM, FWAY…IFII, KLIF…WYSY, MVAG…VMYS, FITL…YLVF, and IFWS…FFFE.

The protein belongs to the ELO family. ELOVL6 subfamily. N-Glycosylated. As to expression, ubiquitous.

The protein localises to the endoplasmic reticulum membrane. It carries out the reaction a very-long-chain acyl-CoA + malonyl-CoA + H(+) = a very-long-chain 3-oxoacyl-CoA + CO2 + CoA. The catalysed reaction is hexadecanoyl-CoA + malonyl-CoA + H(+) = 3-oxooctadecanoyl-CoA + CO2 + CoA. The enzyme catalyses (9Z)-hexadecenoyl-CoA + malonyl-CoA + H(+) = 3-oxo-(11Z)-octadecenoyl-CoA + CO2 + CoA. It catalyses the reaction dodecanoyl-CoA + malonyl-CoA + H(+) = 3-oxotetradecanoyl-CoA + CO2 + CoA. It carries out the reaction tetradecanoyl-CoA + malonyl-CoA + H(+) = 3-oxohexadecanoyl-CoA + CO2 + CoA. The catalysed reaction is (9Z)-octadecenoyl-CoA + malonyl-CoA + H(+) = 3-oxo-(11Z)-eicosenoyl-CoA + CO2 + CoA. The enzyme catalyses (9Z,12Z)-octadecadienoyl-CoA + malonyl-CoA + H(+) = (11Z,14Z)-3-oxoicosa-11,14-dienoyl-CoA + CO2 + CoA. It catalyses the reaction (9Z,12Z,15Z)-octadecatrienoyl-CoA + malonyl-CoA + H(+) = (11Z,14Z,17Z)-3-oxoeicosatrienoyl-CoA + CO2 + CoA. It functions in the pathway lipid metabolism; fatty acid biosynthesis. With respect to regulation, the reaction is stimulated by the presence of HSD17B12, the enzyme catalyzing the second step of the elongation cycle. In terms of biological role, catalyzes the first and rate-limiting reaction of the four reactions that constitute the long-chain fatty acids elongation cycle. This endoplasmic reticulum-bound enzymatic process allows the addition of 2 carbons to the chain of long- and very long-chain fatty acids (VLCFAs) per cycle. Condensing enzyme that elongates fatty acids with 12, 14 and 16 carbons with higher activity toward C16:0 acyl-CoAs. Catalyzes the synthesis of unsaturated C16 long chain fatty acids and, to a lesser extent, C18:0 and those with low desaturation degree. May participate in the production of saturated and monounsaturated VLCFAs of different chain lengths that are involved in multiple biological processes as precursors of membrane lipids and lipid mediators. The sequence is that of Very long chain fatty acid elongase 6 from Homo sapiens (Human).